We begin with the raw amino-acid sequence, 770 residues long: Proton-coupled zinc antiporter SLC30A5 (770 aa).

The Cytoplasmic segment spans residues 1–29 (MEEKYSSQALAGGGVLGPVDVPSARLTRY). The chain crosses the membrane as a helical span at residues 30–50 (IVLLCFAKFLKAVGLFESYDL). The Lumenal portion of the chain corresponds to 51 to 53 (LKA). The chain crosses the membrane as a helical span at residues 54–74 (VHLVQFIFIVKLGSAFFMVLF). Residues 75–95 (QKPFSSGKVVTKHQWIKIFKH) are Cytoplasmic-facing. Residues 96 to 116 (AVVGCIISLLWFFGLTLCGPL) form a helical membrane-spanning segment. Arginine 117 is a topological domain (lumenal). The chain crosses the membrane as a helical span at residues 118 to 138 (TLLLFEHSDVVVLSLLSVLFT). Over 139 to 149 (SSGGGPAKTRG) the chain is Cytoplasmic. Residues 150–170 (AAFFIIAVICLLLFDNDDLMA) form a helical membrane-spanning segment. The Lumenal segment spans residues 171–190 (KIAEHPEGHHDSALTHVLYT). Residues 191–211 (VIAFLGVADHKGGVLLLVLAL) form a helical membrane-spanning segment. Residues 212–235 (CCKVGFHMASRKLSVDVGGAKRLQ) lie on the Cytoplasmic side of the membrane. Residues 236–256 (ALSHLVSVLLLCPWVIVLSLT) form a helical membrane-spanning segment. The Lumenal segment spans residues 257 to 264 (TESKVESW). Residues 265–285 (SSLIMPFITVIFFVVILDFYV) traverse the membrane as a helical segment. Residues 286–300 (ESICSVKMESSKCAR) lie on the Cytoplasmic side of the membrane. The chain crosses the membrane as a helical span at residues 301–321 (YGSFLIFISALLFGNFWTHPI). Over 322-339 (TDQLRAMNKPAHHESTEH) the chain is Lumenal. Residues 340-360 (VLSGGVVVSAVFFILSANILS) form a helical membrane-spanning segment. Residues 361-415 (SPSRKGQKGTLIGYSPEGTPLYNFMGDAIQQSSQSLPRFIKESLKQILEEYDSRQ) lie on the Cytoplasmic side of the membrane. A helical transmembrane segment spans residues 416 to 436 (IFYFLCLNLAFTFVELFYGVW). Residues 437–445 (TNSLGLISD) lie on the Lumenal side of the membrane. Residues 446–466 (GFHMLFDCSALVMGLFAALMT) traverse the membrane as a helical segment. Zn(2+) is bound by residues histidine 448 and aspartate 452. The Cytoplasmic portion of the chain corresponds to 467–480 (RWKATRIFSYGYGR). The chain crosses the membrane as a helical span at residues 481-501 (VEILSGFINGLFLMVIAFFVF). Residues 502–517 (MESVARLVDPPDIDTN) lie on the Lumenal side of the membrane. A helical transmembrane segment spans residues 518 to 538 (MLTPVSVGGLIVNLVGICAFS). Residues 539–579 (HAHSHGASRGGCHSHEHSHSYHGHSHSHGHGHSHNDHGHSH) form a his-rich loop; required for zinc transport region. Residues 539 to 597 (HAHSHGASRGGCHSHEHSHSYHGHSHSHGHGHSHNDHGHSHGHSHVSSGGGMNTNMRGV) are Cytoplasmic-facing. Residues 548-586 (GGCHSHEHSHSYHGHSHSHGHGHSHNDHGHSHGHSHVSS) form a disordered region. Residues 558-570 (SYHGHSHSHGHGH) show a composition bias toward basic residues. The helical transmembrane segment at 598-618 (FLHVLADTLGSVGVIVSTTFI) threads the bilayer. Residues histidine 600 and aspartate 604 each contribute to the Zn(2+) site. Residues 619 to 622 (QQFG) lie on the Lumenal side of the membrane. A helical transmembrane segment spans residues 623-643 (WLIADPLCSLFIATLIFLSVI). The Cytoplasmic portion of the chain corresponds to 644 to 770 (PLLKDACQVL…KYYKDGTYIM (127 aa)).

This sequence belongs to the cation diffusion facilitator (CDF) transporter (TC 2.A.4) family. SLC30A subfamily. Heterodimer with SLC30A6/ZNT6; form a functional zinc ion transmembrane transporter.

It localises to the golgi apparatus. Its subcellular location is the golgi stack membrane. The protein resides in the cytoplasmic vesicle. The protein localises to the COPII-coated vesicle membrane. It is found in the secretory vesicle membrane. It localises to the trans-Golgi network membrane. The catalysed reaction is Zn(2+)(in) + 2 H(+)(out) = Zn(2+)(out) + 2 H(+)(in). Its function is as follows. Together with SLC30A6 forms a functional proton-coupled zinc ion antiporter mediating zinc entry into the lumen of organelles along the secretory pathway. By contributing to zinc ion homeostasis within the early secretory pathway, regulates the activation and folding of enzymes like alkaline phosphatases and enzymes involved in phosphatidylinositol glycan anchor biosynthesis. The chain is Proton-coupled zinc antiporter SLC30A5 from Gallus gallus (Chicken).